The sequence spans 481 residues: GTPase Der (481 aa).

EngA-type G domains lie at 47-210 and 221-394; these read PVLA…PDVS and RRVA…ESWE. GTP is bound by residues 53–60, 100–104, 162–165, 227–234, 274–278, and 339–342; these read GRPNVGKS, DTGGW, NKVD, DTAGI, and NKWD. One can recognise a KH-like domain in the interval 395-477; sequence TRIPTGKFNA…PIVLNMRVRE (83 aa).

The protein belongs to the TRAFAC class TrmE-Era-EngA-EngB-Septin-like GTPase superfamily. EngA (Der) GTPase family. As to quaternary structure, associates with the 50S ribosomal subunit.

In terms of biological role, GTPase that plays an essential role in the late steps of ribosome biogenesis. In Leifsonia xyli subsp. xyli (strain CTCB07), this protein is GTPase Der.